Reading from the N-terminus, the 184-residue chain is Uroplakin-2 (184 aa).

The signal sequence occupies residues 1 to 25 (MAPLLPIRTLPLILILLALLSPGAA). A propeptide spanning residues 26-84 (DFNISSLSGLLSPALTESLLVALPPCHLTGGNATLMVRRANDSKVVTSSFVVPPCRGRR) is cleaved from the precursor. Residues asparagine 28, asparagine 57, and asparagine 66 are each glycosylated (N-linked (GlcNAc...) asparagine). Over 85 to 155 (ELVSVVDSGA…IGLGMARTGG (71 aa)) the chain is Lumenal. A helical transmembrane segment spans residues 156-176 (MVVITVLLSVAMFLLVLGFII). Residues 177 to 184 (ALALGSRK) lie on the Cytoplasmic side of the membrane.

This sequence belongs to the uroplakin-2 family. Interacts with uroplakin-1a (UPK1A). Expressed in ureter.

It localises to the cell membrane. Functionally, component of the asymmetric unit membrane (AUM); a highly specialized biomembrane elaborated by terminally differentiated urothelial cells. May play an important role in regulating the assembly of the AUM. The polypeptide is Uroplakin-2 (UPK2) (Homo sapiens (Human)).